Consider the following 417-residue polypeptide: Hydroxysqualene dehydroxylase (417 aa).

It belongs to the HpnE family.

The enzyme catalyses squalene + FAD + H2O + H(+) = hydroxysqualene + FADH2. It functions in the pathway secondary metabolite biosynthesis; hopanoid biosynthesis. In terms of biological role, involved in the biosynthesis of the hopanoid precursor squalene (SQ) from farnesyl diphosphate (FPP). Catalyzes the third (last) step, the reduction of hydroxysqualene (HSQ) to SQ. The sequence is that of Hydroxysqualene dehydroxylase from Sinorhizobium fredii (strain NBRC 101917 / NGR234).